The primary structure comprises 493 residues: 3-octaprenyl-4-hydroxybenzoate carboxy-lyase (493 aa).

Asn172 is a Mn(2+) binding site. Residues 175-177 (IYR), 189-191 (RWL), and 194-195 (RG) each bind prenylated FMN. Glu238 contacts Mn(2+). Catalysis depends on Asp287, which acts as the Proton donor.

This sequence belongs to the UbiD family. Homohexamer. The cofactor is prenylated FMN. It depends on Mn(2+) as a cofactor.

Its subcellular location is the cell membrane. The enzyme catalyses a 4-hydroxy-3-(all-trans-polyprenyl)benzoate + H(+) = a 2-(all-trans-polyprenyl)phenol + CO2. It functions in the pathway cofactor biosynthesis; ubiquinone biosynthesis. In terms of biological role, catalyzes the decarboxylation of 3-octaprenyl-4-hydroxy benzoate to 2-octaprenylphenol, an intermediate step in ubiquinone biosynthesis. The sequence is that of 3-octaprenyl-4-hydroxybenzoate carboxy-lyase from Shewanella denitrificans (strain OS217 / ATCC BAA-1090 / DSM 15013).